Consider the following 301-residue polypeptide: 2-dehydropantoate 2-reductase (301 aa).

NADP(+) contacts are provided by residues 11–16 (GAGAMG), asparagine 107, and alanine 133. Position 107 (asparagine 107) interacts with substrate. Lysine 187 serves as the catalytic Proton donor. Asparagine 191, asparagine 195, asparagine 205, and serine 251 together coordinate substrate. Glutamate 263 contributes to the NADP(+) binding site.

It belongs to the ketopantoate reductase family.

It localises to the cytoplasm. The enzyme catalyses (R)-pantoate + NADP(+) = 2-dehydropantoate + NADPH + H(+). It participates in cofactor biosynthesis; (R)-pantothenate biosynthesis; (R)-pantoate from 3-methyl-2-oxobutanoate: step 2/2. Its function is as follows. Catalyzes the NADPH-dependent reduction of ketopantoate into pantoic acid. The chain is 2-dehydropantoate 2-reductase from Listeria innocua serovar 6a (strain ATCC BAA-680 / CLIP 11262).